We begin with the raw amino-acid sequence, 149 residues long: Ribonuclease pancreatic alpha-type (149 aa).

A signal peptide spans Met1 to Gly25. Substrate is bound by residues Lys32 and Arg35. His37 functions as the Proton acceptor in the catalytic mechanism. 4 disulfide bridges follow: Cys51/Cys109, Cys65/Cys120, Cys83/Cys135, and Cys90/Cys97. Substrate contacts are provided by residues Lys66–Thr70, Lys91, and Arg110. Residue His144 is the Proton donor of the active site.

The protein belongs to the pancreatic ribonuclease family. Monomer.

It localises to the secreted. The catalysed reaction is an [RNA] containing cytidine + H2O = an [RNA]-3'-cytidine-3'-phosphate + a 5'-hydroxy-ribonucleotide-3'-[RNA].. It catalyses the reaction an [RNA] containing uridine + H2O = an [RNA]-3'-uridine-3'-phosphate + a 5'-hydroxy-ribonucleotide-3'-[RNA].. Its function is as follows. Endonuclease that catalyzes the cleavage of RNA on the 3' side of pyrimidine nucleotides. Acts on single-stranded and double-stranded RNA. The polypeptide is Ribonuclease pancreatic alpha-type (Rattus fuscipes (Bush rat)).